A 249-amino-acid chain; its full sequence is Acetylglutamate kinase (249 aa).

Substrate contacts are provided by residues 38–39, R60, and N147; that span reads GG.

The protein belongs to the acetylglutamate kinase family. ArgB subfamily.

It is found in the cytoplasm. It carries out the reaction N-acetyl-L-glutamate + ATP = N-acetyl-L-glutamyl 5-phosphate + ADP. It functions in the pathway amino-acid biosynthesis; L-arginine biosynthesis; N(2)-acetyl-L-ornithine from L-glutamate: step 2/4. Its function is as follows. Catalyzes the ATP-dependent phosphorylation of N-acetyl-L-glutamate. The polypeptide is Acetylglutamate kinase (Deinococcus geothermalis (strain DSM 11300 / CIP 105573 / AG-3a)).